The sequence spans 88 residues: KTx type I (88 aa).

A signal peptide spans 1 to 19 (MKTTLVVVVLACIVALTSA). Positions 54 to 88 (CKDVLSEFSCGVLKKDGQCNKADIQAKCKLTCDKC) constitute a ShKT domain. Disulfide bonds link Cys-54–Cys-88, Cys-63–Cys-81, and Cys-72–Cys-85.

It belongs to the sea anemone type 1 potassium channel toxin family. As to expression, expressed both outside and in acontia, a specialised envenomation structure laden with batteries of venom-containing nematocysts found only in the superfamily Metridioidea.

The protein resides in the secreted. Its subcellular location is the nematocyst. Its function is as follows. Inhibits voltage-gated potassium channels (Kv1/KCNA). This chain is KTx type I, found in Calliactis polypus (Hermit crab anemone).